Reading from the N-terminus, the 280-residue chain is L-aspartate dehydrogenase (280 aa).

NAD(+) is bound by residues Ala-134 and Asn-202. Residue His-232 is part of the active site.

The protein belongs to the L-aspartate dehydrogenase family.

The enzyme catalyses L-aspartate + NADP(+) + H2O = oxaloacetate + NH4(+) + NADPH + H(+). It carries out the reaction L-aspartate + NAD(+) + H2O = oxaloacetate + NH4(+) + NADH + H(+). It functions in the pathway cofactor biosynthesis; NAD(+) biosynthesis; iminoaspartate from L-aspartate (dehydrogenase route): step 1/1. Functionally, specifically catalyzes the NAD or NADP-dependent dehydrogenation of L-aspartate to iminoaspartate. This chain is L-aspartate dehydrogenase, found in Bradyrhizobium diazoefficiens (strain JCM 10833 / BCRC 13528 / IAM 13628 / NBRC 14792 / USDA 110).